Here is a 695-residue protein sequence, read N- to C-terminus: GATA zinc finger domain-containing protein 16 (695 aa).

Disordered stretches follow at residues 82–111 (SPIL…SNNA), 134–304 (VVNS…QQDK), and 422–472 (NNQF…KMRY). Low complexity-rich tracts occupy residues 87–111 (SQQQ…SNNA) and 140–149 (KTTTTNNKPP). Positions 150 to 174 (KQSKRKEKERLEEEKQTVAQQQQYQ) form a coiled coil. The segment covering 155–165 (KEKERLEEEKQ) has biased composition (basic and acidic residues). Residues 199 to 209 (VSTTPYGNSQF) are compositionally biased toward polar residues. Positions 210-298 (NNNNNNNNNN…NSNSNNNNNN (89 aa)) are enriched in low complexity. A compositionally biased stretch (polar residues) spans 422–433 (NNQFSGDKQSAL). Residues 434 to 446 (NNVKNSKGGNTNN) show a composition bias toward low complexity. The GATA-type zinc-finger motif lies at 479-504 (CHTCGVTNTPEWRRGPNGAKTLCNAC). The segment at 523-646 (NSTGVNITEP…TTNSITTPTT (124 aa)) is disordered. Composition is skewed to low complexity over residues 544–556 (DNNN…SDSN) and 564–646 (GSNN…TPTT).

This Dictyostelium discoideum (Social amoeba) protein is GATA zinc finger domain-containing protein 16 (gtaP).